A 182-amino-acid polypeptide reads, in one-letter code: Peptidyl-tRNA hydrolase (182 aa).

Y14 lines the tRNA pocket. H19 serves as the catalytic Proton acceptor. TRNA is bound by residues F60, N62, and N106.

Belongs to the PTH family. Monomer.

The protein resides in the cytoplasm. The enzyme catalyses an N-acyl-L-alpha-aminoacyl-tRNA + H2O = an N-acyl-L-amino acid + a tRNA + H(+). Hydrolyzes ribosome-free peptidyl-tRNAs (with 1 or more amino acids incorporated), which drop off the ribosome during protein synthesis, or as a result of ribosome stalling. Its function is as follows. Catalyzes the release of premature peptidyl moieties from peptidyl-tRNA molecules trapped in stalled 50S ribosomal subunits, and thus maintains levels of free tRNAs and 50S ribosomes. The polypeptide is Peptidyl-tRNA hydrolase (Campylobacter concisus (strain 13826)).